The following is a 458-amino-acid chain: MDDVKDKLKGFMKKVNLSSSSGKFKGQGRVLGSSSSSSAPPVNPIQNRFNSSQAPNPTPRPKPNPNPLPEKPLSSSDQKISGSTRNPDHDPVRAPQDGFDPYGAFITSSNRSQNGYSLSMFECPICKNPFTSEEEVSVHVESCLGDTNGDESSFEKDNNDNDKSEMEKLVVVYLSGKPSESSIDVLLRLFKNIVKEPENAKFRKVRMSNAKIKEAIGDVAGGVELLELVGFELKEENDEIWAVMDVPSEEQSILINKVVGYLEKRKTESSGSSAQVMEPVAPKKIDREIRVFFSVSENVASRIEVPDSFYSLSADEIKREADLRRKKIAESQLLIPRSYKEKQAKAARKRYKRSMIRVQFPDGVVLQGVFAPWEPTFALYEFVSSALKEPSLQFELLDPVLVKRRVIPHTPAPGQKPITLEDEELVPSALIRFRPIETDSLVFTGLRNELLEISEPLS.

The segment at 1–103 (MDDVKDKLKG…APQDGFDPYG (103 aa)) is disordered. The segment covering 44–54 (PIQNRFNSSQA) has biased composition (polar residues). Residues 56-70 (NPTPRPKPNPNPLPE) show a composition bias toward pro residues. Positions 74-85 (SSSDQKISGSTR) are enriched in polar residues. A C2H2-type; atypical zinc finger spans residues 121 to 143 (FECPICKNPFTSEEEVSVHVESC). The 68-residue stretch at 181–248 (SSIDVLLRLF…EIWAVMDVPS (68 aa)) folds into the PUB domain. Residues 349–433 (KRYKRSMIRV…ELVPSALIRF (85 aa)) form the UBX domain.

Interacts with CDC48A in vitro and co-fractionates with membrane-associated but not soluble CDC48A in vivo.

Its subcellular location is the membrane. Functionally, facilitates the interaction of SYP31 and CDC48A, thereby regulating an CDC48A membrane-associated function. Appears to act as a negative regulator mediating the powdery mildew-plant interaction. This is Plant UBX domain-containing protein 2 from Arabidopsis thaliana (Mouse-ear cress).